A 215-amino-acid polypeptide reads, in one-letter code: Imidazole glycerol phosphate synthase subunit HisH (215 aa).

Positions 9-215 (EVVLVDYGLG…QNFVDYCLER (207 aa)) constitute a Glutamine amidotransferase type-1 domain. Residue cysteine 85 is the Nucleophile of the active site. Active-site residues include histidine 193 and glutamate 195.

In terms of assembly, heterodimer of HisH and HisF.

The protein resides in the cytoplasm. The catalysed reaction is 5-[(5-phospho-1-deoxy-D-ribulos-1-ylimino)methylamino]-1-(5-phospho-beta-D-ribosyl)imidazole-4-carboxamide + L-glutamine = D-erythro-1-(imidazol-4-yl)glycerol 3-phosphate + 5-amino-1-(5-phospho-beta-D-ribosyl)imidazole-4-carboxamide + L-glutamate + H(+). It carries out the reaction L-glutamine + H2O = L-glutamate + NH4(+). It participates in amino-acid biosynthesis; L-histidine biosynthesis; L-histidine from 5-phospho-alpha-D-ribose 1-diphosphate: step 5/9. Functionally, IGPS catalyzes the conversion of PRFAR and glutamine to IGP, AICAR and glutamate. The HisH subunit catalyzes the hydrolysis of glutamine to glutamate and ammonia as part of the synthesis of IGP and AICAR. The resulting ammonia molecule is channeled to the active site of HisF. This Natronomonas pharaonis (strain ATCC 35678 / DSM 2160 / CIP 103997 / JCM 8858 / NBRC 14720 / NCIMB 2260 / Gabara) (Halobacterium pharaonis) protein is Imidazole glycerol phosphate synthase subunit HisH.